A 472-amino-acid polypeptide reads, in one-letter code: Adenosylhomocysteinase (472 aa).

Substrate-binding residues include T64, D138, and E198. An NAD(+)-binding site is contributed by 199 to 201 (TTT). Residues K228 and D232 each coordinate substrate. Residues N233, 262–267 (GFGDVG), E285, N320, 341–343 (IGH), and N386 contribute to the NAD(+) site.

Belongs to the adenosylhomocysteinase family. The cofactor is NAD(+).

The protein localises to the cytoplasm. The enzyme catalyses S-adenosyl-L-homocysteine + H2O = L-homocysteine + adenosine. It participates in amino-acid biosynthesis; L-homocysteine biosynthesis; L-homocysteine from S-adenosyl-L-homocysteine: step 1/1. Its function is as follows. May play a key role in the regulation of the intracellular concentration of adenosylhomocysteine. This Prochlorococcus marinus (strain MIT 9215) protein is Adenosylhomocysteinase.